A 747-amino-acid chain; its full sequence is uncharacterized protein (747 aa).

Residues 7 to 27 (FFLKVISVIAPIVIIPTILAN) traverse the membrane as a helical segment.

The protein localises to the membrane. This is an uncharacterized protein from Ureaplasma parvum serovar 3 (strain ATCC 700970).